Consider the following 76-residue polypeptide: Exodeoxyribonuclease 7 small subunit (76 aa).

The protein belongs to the XseB family. Heterooligomer composed of large and small subunits.

It is found in the cytoplasm. It carries out the reaction Exonucleolytic cleavage in either 5'- to 3'- or 3'- to 5'-direction to yield nucleoside 5'-phosphates.. Bidirectionally degrades single-stranded DNA into large acid-insoluble oligonucleotides, which are then degraded further into small acid-soluble oligonucleotides. The protein is Exodeoxyribonuclease 7 small subunit of Geotalea daltonii (strain DSM 22248 / JCM 15807 / FRC-32) (Geobacter daltonii).